A 318-amino-acid polypeptide reads, in one-letter code: Type II restriction enzyme HaeIII (318 aa).

It catalyses the reaction Endonucleolytic cleavage of DNA to give specific double-stranded fragments with terminal 5'-phosphates.. A P subtype restriction enzyme that recognizes the double-stranded sequence 5'-GGCC-3' and cleaves after G-2. This is Type II restriction enzyme HaeIII (haeIIIR) from Haemophilus aegyptius.